A 413-amino-acid polypeptide reads, in one-letter code: Multifunctional CCA protein (413 aa).

Residues G8 and R11 each coordinate ATP. G8 and R11 together coordinate CTP. The Mg(2+) site is built by D21 and D23. ATP is bound by residues R91, R137, and R140. CTP contacts are provided by R91, R137, and R140. Residues 228-329 (TGVHTLMTLS…VKLFDAIDAW (102 aa)) enclose the HD domain.

Belongs to the tRNA nucleotidyltransferase/poly(A) polymerase family. Bacterial CCA-adding enzyme type 1 subfamily. In terms of assembly, monomer. Can also form homodimers and oligomers. Requires Mg(2+) as cofactor. It depends on Ni(2+) as a cofactor.

It catalyses the reaction a tRNA precursor + 2 CTP + ATP = a tRNA with a 3' CCA end + 3 diphosphate. It carries out the reaction a tRNA with a 3' CCA end + 2 CTP + ATP = a tRNA with a 3' CCACCA end + 3 diphosphate. Functionally, catalyzes the addition and repair of the essential 3'-terminal CCA sequence in tRNAs without using a nucleic acid template. Adds these three nucleotides in the order of C, C, and A to the tRNA nucleotide-73, using CTP and ATP as substrates and producing inorganic pyrophosphate. tRNA 3'-terminal CCA addition is required both for tRNA processing and repair. Also involved in tRNA surveillance by mediating tandem CCA addition to generate a CCACCA at the 3' terminus of unstable tRNAs. While stable tRNAs receive only 3'-terminal CCA, unstable tRNAs are marked with CCACCA and rapidly degraded. In Salmonella paratyphi A (strain ATCC 9150 / SARB42), this protein is Multifunctional CCA protein.